Consider the following 1034-residue polypeptide: Error-prone DNA polymerase (1034 aa).

The protein belongs to the DNA polymerase type-C family. DnaE2 subfamily.

The protein resides in the cytoplasm. The catalysed reaction is DNA(n) + a 2'-deoxyribonucleoside 5'-triphosphate = DNA(n+1) + diphosphate. In terms of biological role, DNA polymerase involved in damage-induced mutagenesis and translesion synthesis (TLS). It is not the major replicative DNA polymerase. The polypeptide is Error-prone DNA polymerase (Pseudomonas fluorescens (strain ATCC BAA-477 / NRRL B-23932 / Pf-5)).